Here is a 615-residue protein sequence, read N- to C-terminus: Proteasome-associated ATPase (615 aa).

A disordered region spans residues 1 to 36 (MSESERPEAGDGTDALGASPDTPLSSEDAAELEQLR). Residues 25–102 (SSEDAAELEQ…LREEVDRLGQ (78 aa)) adopt a coiled-coil conformation. Residue 302 to 307 (GCGKTL) participates in ATP binding. Positions 614-615 (YL) are docks into pockets in the proteasome alpha-ring.

Belongs to the AAA ATPase family. Homohexamer. Assembles into a hexameric ring structure that caps the 20S proteasome core. Strongly interacts with the prokaryotic ubiquitin-like protein Pup through a hydrophobic interface; the interacting region of ARC lies in its N-terminal coiled-coil domain. There is one Pup binding site per ARC hexamer ring. Upon ATP-binding, the C-terminus of ARC interacts with the alpha-rings of the proteasome core, possibly by binding to the intersubunit pockets.

It functions in the pathway protein degradation; proteasomal Pup-dependent pathway. ATPase which is responsible for recognizing, binding, unfolding and translocation of pupylated proteins into the bacterial 20S proteasome core particle. May be essential for opening the gate of the 20S proteasome via an interaction with its C-terminus, thereby allowing substrate entry and access to the site of proteolysis. Thus, the C-termini of the proteasomal ATPase may function like a 'key in a lock' to induce gate opening and therefore regulate proteolysis. The sequence is that of Proteasome-associated ATPase from Mycolicibacterium gilvum (strain PYR-GCK) (Mycobacterium gilvum (strain PYR-GCK)).